Here is an 836-residue protein sequence, read N- to C-terminus: Transcriptional regulatory protein UME6 (836 aa).

The span at M1 to E14 shows a compositional bias: basic and acidic residues. 4 disordered regions span residues M1–L77, S92–H168, H218–C332, and N381–Y464. 3 stretches are compositionally biased toward polar residues: residues S39–Q48, G61–L77, and S92–V112. S114 is subject to Phosphoserine. The segment covering D117–D126 has biased composition (basic and acidic residues). Phosphoserine occurs at positions 141, 150, and 228. A compositionally biased stretch (low complexity) spans A226–G236. Residues T258–M272 show a composition bias toward polar residues. A compositionally biased stretch (low complexity) spans S273 to G305. Phosphoserine is present on residues S316 and S318. Residues S316–H325 show a composition bias toward polar residues. The span at N381–S398 shows a compositional bias: low complexity. Residues R399–Q414 show a composition bias toward polar residues. Positions P426–N446 are enriched in low complexity. Positions N508–T594 are SIN3-binding. Residues N636–R766 are disordered. Position 645 is a phosphoserine (S645). The segment covering V670–N679 has biased composition (polar residues). Residues S680 to A702 show a composition bias toward low complexity. Over residues S718–P739 the composition is skewed to basic residues. A compositionally biased stretch (low complexity) spans N740 to S751. The zn(2)-C6 fungal-type DNA-binding region spans C771 to C798.

As to quaternary structure, component of the RPD3C(L) complex composed of at least ASH1, CTI6, DEP1, PHO23, RPD3, RXT2, RXT3, SAP30, SDS3, SIN3, UME1 and UME6. Interacts with RIM11, MCK1 and IME1. Post-translationally, phosphorylated by RIM11 and MCK1.

Its subcellular location is the nucleus. Its function is as follows. Component of the RPD3C(L) histone deacetylase complex (HDAC) responsible for the deacetylation of lysine residues on the N-terminal part of the core histones (H2A, H2B, H3 and H4). Histone deacetylation gives a tag for epigenetic repression and plays an important role in transcriptional regulation, cell cycle progression and developmental events. Binds to the URS1 site (5'-AGCCGCCGA-3') and recruits the RPD3 histone deacetylase complex to the promoters to negatively regulate the expression of many genes including CAR1 (arginase), several required for sporulation, mating type switching, inositol metabolism, and oxidative carbon metabolism. Also recruits the ISW2 chromatin remodeling complex to promoters in a second gene repression pathway. Associates with the master regulator of meiosis IME1 in order to activate the expression of meiosis genes. Has both a positive and negative role in regulating phospholipid biosynthesis. This chain is Transcriptional regulatory protein UME6 (UME6), found in Saccharomyces cerevisiae (strain ATCC 204508 / S288c) (Baker's yeast).